Consider the following 147-residue polypeptide: Phospholipase A2 inhibitor subunit B (147 aa).

A C-type lectin domain is found at Glu62–Phe143. Intrachain disulfides connect Cys64/Cys141 and Cys119/Cys133. N-linked (GlcNAc...) asparagine glycosylation is present at Asn103.

It belongs to the alpha-type phospholipase A2 inhibitor family. In terms of assembly, homo- or heterotrimer; homotrimer of PLI-A chains, two PLI-A and one PLI-B chains, one PLI-A and two PLI-B chains, and homotrimer of PLI-B chains (with a ratio of 1:3:3:1). Expressed by the liver.

It localises to the secreted. PLI binds directly phospholipase A2 in the presence or absence of calcium. Inhibitory activity of the PLI-B homotrimer is less specific than that of the PLI-A homotrimer. The polypeptide is Phospholipase A2 inhibitor subunit B (Protobothrops flavoviridis (Habu)).